The primary structure comprises 118 residues: CLAVATA3/ESR (CLE)-related protein 12 (118 aa).

Positions 1 to 35 (MLRISSSSSMALKFSQILFIVLWLSLFFLLLHHLY) are cleaved as a signal peptide. 2 stretches are compositionally biased toward basic and acidic residues: residues 75–91 (TPFH…RSGE) and 98–108 (IDPRYGVEKRR). A disordered region spans residues 75-118 (TPFHSRDNSRHNHRSGEQYDGDEIDPRYGVEKRRVPSGPNPLHH). A hydroxyproline mark is found at proline 110 and proline 113. O-linked (Ara...) hydroxyproline glycosylation is present at proline 113.

Belongs to the CLV3/ESR signal peptide family. Post-translationally, the O-glycosylation (arabinosylation) of the hydroxyproline Pro-113 enhances binding affinity of the CLE12p peptide for its receptor. As to expression, mostly expressed in seedlings, roots, flowers, stems and apex, and, to a lower extent, in leaves and siliques.

The protein localises to the secreted. The protein resides in the extracellular space. Its function is as follows. Extracellular signal peptide that regulates cell fate. Represses root apical meristem maintenance. In Arabidopsis thaliana (Mouse-ear cress), this protein is CLAVATA3/ESR (CLE)-related protein 12.